The chain runs to 216 residues: Imidazole glycerol phosphate synthase subunit HisH (216 aa).

A Glutamine amidotransferase type-1 domain is found at 2 to 216 (RVAIIDYGSG…FIANFLKWKP (215 aa)). C88 (nucleophile) is an active-site residue. Catalysis depends on residues H196 and E198.

Heterodimer of HisH and HisF.

Its subcellular location is the cytoplasm. The enzyme catalyses 5-[(5-phospho-1-deoxy-D-ribulos-1-ylimino)methylamino]-1-(5-phospho-beta-D-ribosyl)imidazole-4-carboxamide + L-glutamine = D-erythro-1-(imidazol-4-yl)glycerol 3-phosphate + 5-amino-1-(5-phospho-beta-D-ribosyl)imidazole-4-carboxamide + L-glutamate + H(+). It carries out the reaction L-glutamine + H2O = L-glutamate + NH4(+). It functions in the pathway amino-acid biosynthesis; L-histidine biosynthesis; L-histidine from 5-phospho-alpha-D-ribose 1-diphosphate: step 5/9. Functionally, IGPS catalyzes the conversion of PRFAR and glutamine to IGP, AICAR and glutamate. The HisH subunit catalyzes the hydrolysis of glutamine to glutamate and ammonia as part of the synthesis of IGP and AICAR. The resulting ammonia molecule is channeled to the active site of HisF. This chain is Imidazole glycerol phosphate synthase subunit HisH, found in Brucella melitensis biotype 1 (strain ATCC 23456 / CCUG 17765 / NCTC 10094 / 16M).